The primary structure comprises 130 residues: Small ribosomal subunit protein uS11c (130 aa).

It belongs to the universal ribosomal protein uS11 family. Part of the 30S ribosomal subunit.

The protein localises to the plastid. Its subcellular location is the chloroplast. This chain is Small ribosomal subunit protein uS11c, found in Trieres chinensis (Marine centric diatom).